Consider the following 89-residue polypeptide: Small ribosomal subunit protein bS20 (89 aa).

The segment at Met-1–Ser-26 is disordered. Basic residues predominate over residues Lys-16–Ser-26.

The protein belongs to the bacterial ribosomal protein bS20 family.

Its function is as follows. Binds directly to 16S ribosomal RNA. This is Small ribosomal subunit protein bS20 from Buchnera aphidicola subsp. Acyrthosiphon pisum (strain 5A).